Consider the following 160-residue polypeptide: V-type proton ATPase subunit c (160 aa).

Residues 1–8 (MTELCPVY) are Vacuolar-facing. A helical transmembrane segment spans residues 9 to 31 (APFFGAIGCASAIIFTSLGAAYG). The Cytoplasmic segment spans residues 32–53 (TAKSGVGICATCVLRPDLLFKN). A helical membrane pass occupies residues 54 to 74 (IVPVIMAGIIAIYGLVVSVLV). The Vacuolar portion of the chain corresponds to 75 to 90 (CYSLGQKQALYTGFIQ). The chain crosses the membrane as a helical span at residues 91 to 112 (LGAGLSVGLSGLAAGFAIGIVG). Over 113 to 124 (DAGVRGSSQQPR) the chain is Cytoplasmic. A helical transmembrane segment spans residues 125 to 150 (LFVGMILILIFAEVLGLYGLIVALLL). The Vacuolar segment spans residues 151–160 (NSRATQDVVC).

It belongs to the V-ATPase proteolipid subunit family. As to quaternary structure, V-ATPase is a heteromultimeric enzyme composed of a peripheral catalytic V1 complex (components A to H) attached to an integral membrane V0 proton pore complex (components: a, c, c', c'', d, e, f and VOA1). The decameric c-ring forms the proton-conducting pore, and is composed of eight proteolipid subunits c, one subunit c' and one subunit c''.

It localises to the vacuole membrane. Its function is as follows. Proton-conducting pore forming subunit of the V0 complex of vacuolar(H+)-ATPase (V-ATPase), a multisubunit enzyme composed of a peripheral complex (V1) that hydrolyzes ATP and a membrane integral complex (V0) that translocates protons. V-ATPase is responsible for acidifying and maintaining the pH of intracellular compartments. This Saccharomyces cerevisiae (strain ATCC 204508 / S288c) (Baker's yeast) protein is V-type proton ATPase subunit c (VMA3).